A 513-amino-acid chain; its full sequence is Zinc finger protein 395 (513 aa).

The span at 17-29 shows a compositional bias: low complexity; sequence ARVLGPSASEGPS. The segment at 17–56 is disordered; that stretch reads ARVLGPSASEGPSAAPPSEPLLEGAAPQPFTTSDDTPCQE. The segment covering 45–55 has biased composition (polar residues); that stretch reads PFTTSDDTPCQ. The short motif at 165–174 is the Nuclear export signal element; that stretch reads MDEMMAAMVL. The interval 204-269 is disordered; sequence KESGDISDSG…DPFLLDEPAP (66 aa). Residues 209–229 show a composition bias toward low complexity; the sequence is ISDSGSSTTSGHWSGSSGVST. The residue at position 248 (S248) is a Phosphoserine. Residues 280–305 form a C2H2-type zinc finger; sequence YKCLWPNCGKVLRSIVGIKRHVKALH. Residues 335-394 form a disordered region; that stretch reads AAAAAAAGTPVPGTPTSEPAPTPSMTGLPLSALPPPLHKAQSSGPEHPGPESSLPSGALS. Residues 348 to 359 are compositionally biased toward polar residues; it reads TPTSEPAPTPSM. 2 positions are modified to phosphoserine: S376 and S449. The segment covering 376–391 has biased composition (low complexity); the sequence is SSGPEHPGPESSLPSG.

In terms of assembly, interacts with repression-mediating E2 binding site P2 of human papillomavirus type 8 (HPV8). In terms of tissue distribution, widely expressed.

The protein localises to the cytoplasm. The protein resides in the nucleus. Plays a role in papillomavirus genes transcription. This chain is Zinc finger protein 395 (ZNF395), found in Homo sapiens (Human).